Here is a 410-residue protein sequence, read N- to C-terminus: O-methyltransferase afvC (410 aa).

S-adenosyl-L-methionine-binding positions include 253 to 254, Asp278, 299 to 300, and Arg315; these read GG and DF. His319 functions as the Proton acceptor in the catalytic mechanism.

This sequence belongs to the class I-like SAM-binding methyltransferase superfamily. Cation-independent O-methyltransferase family. COMT subfamily.

It functions in the pathway secondary metabolite biosynthesis. Functionally, O-methyltransferase; part of the gene cluster that mediates the biosynthesis of aflavarin, a bicoumarin that exhibits anti-insectan activity against the fungivorous beetle C.hemipterus. The polypeptide is O-methyltransferase afvC (Aspergillus flavus (strain ATCC 200026 / FGSC A1120 / IAM 13836 / NRRL 3357 / JCM 12722 / SRRC 167)).